The following is a 191-amino-acid chain: Protein YceI (191 aa).

Residues 1–22 form the signal peptide; sequence MKKNLLGFTFASLLFTTGSAVA.

The protein belongs to the UPF0312 family. Type 1 subfamily.

Its subcellular location is the periplasm. The polypeptide is Protein YceI (Salmonella agona (strain SL483)).